The sequence spans 218 residues: Adenylate kinase (218 aa).

10–15 (GAGKGT) contacts ATP. The NMP stretch occupies residues 30–59 (STGDMLRAAVKAGTPLGLEAKKVMDAGGLV). Residues T31, R36, 57 to 59 (GLV), 85 to 88 (GFPR), and Q92 each bind AMP. An LID region spans residues 122-159 (GRRVHPASGRSYHVRFNPPKAEGVDDVTGEPLVQRDDD). Residues R123 and 132–133 (SY) contribute to the ATP site. Residues R156 and R167 each coordinate AMP. Residue G203 participates in ATP binding.

It belongs to the adenylate kinase family. In terms of assembly, monomer.

The protein localises to the cytoplasm. The catalysed reaction is AMP + ATP = 2 ADP. Its pathway is purine metabolism; AMP biosynthesis via salvage pathway; AMP from ADP: step 1/1. In terms of biological role, catalyzes the reversible transfer of the terminal phosphate group between ATP and AMP. Plays an important role in cellular energy homeostasis and in adenine nucleotide metabolism. This chain is Adenylate kinase, found in Bordetella bronchiseptica (strain ATCC BAA-588 / NCTC 13252 / RB50) (Alcaligenes bronchisepticus).